The primary structure comprises 258 residues: Alpha-fibrinogenase (258 aa).

A signal peptide spans 1-18; sequence MVLIRVLANLVMLHLSYG. The propeptide occupies 19–24; the sequence is EKSSEL. The 225-residue stretch at 25-249 folds into the Peptidase S1 domain; sequence VIGGRPCNIN…YNDWIQSIIA (225 aa). Intrachain disulfides connect Cys31/Cys163, Cys50/Cys66, Cys98/Cys256, Cys142/Cys210, Cys174/Cys189, and Cys200/Cys225. Asn44 is a glycosylation site (N-linked (GlcNAc...) asparagine). Catalysis depends on His65, which acts as the Charge relay system. Asn79 and Asn101 each carry an N-linked (GlcNAc...) asparagine glycan. Asp110 serves as the catalytic Charge relay system. Catalysis depends on Ser204, which acts as the Charge relay system.

Belongs to the peptidase S1 family. Snake venom subfamily. As to quaternary structure, monomer. Post-translationally, glycosylated. Contains 8.5% of hexoses, 5.8% of hexosamines and 0.8% of sialic acids. As to expression, expressed by the venom gland.

It is found in the secreted. Inhibited by diisopropylfluorophosphate (DFP) and PMSF, and partially by soybean trypsin inhibitor, but not by EDTA. Degrades alpha chain of fibrinogen (FGA), and has strong caseinolytic activity. Cleaves oxidized insulin B-chain at '40-Tyr-|-Leu-41', '48-Phe-|-Phe-49' and '49-Phe-|-Tyr-50', and glucagon at the bonds '62-Tyr-|-Ser-63', 66-Leu-|-Asp-67' and '78-Leu-|-Met-79' bonds. The chain is Alpha-fibrinogenase from Macrovipera lebetinus (Levantine viper).